Consider the following 316-residue polypeptide: Beta-ketoacyl-[acyl-carrier-protein] synthase III (316 aa).

Residues C112 and H243 contribute to the active site. The ACP-binding stretch occupies residues 244–248 (QANLR). N273 is an active-site residue.

It belongs to the thiolase-like superfamily. FabH family. In terms of assembly, homodimer.

The protein resides in the cytoplasm. It catalyses the reaction malonyl-[ACP] + acetyl-CoA + H(+) = 3-oxobutanoyl-[ACP] + CO2 + CoA. Its pathway is lipid metabolism; fatty acid biosynthesis. Its function is as follows. Catalyzes the condensation reaction of fatty acid synthesis by the addition to an acyl acceptor of two carbons from malonyl-ACP. Catalyzes the first condensation reaction which initiates fatty acid synthesis and may therefore play a role in governing the total rate of fatty acid production. Possesses both acetoacetyl-ACP synthase and acetyl transacylase activities. Its substrate specificity determines the biosynthesis of branched-chain and/or straight-chain of fatty acids. The polypeptide is Beta-ketoacyl-[acyl-carrier-protein] synthase III (Yersinia pseudotuberculosis serotype O:1b (strain IP 31758)).